A 68-amino-acid polypeptide reads, in one-letter code: Large ribosomal subunit protein bL32 (68 aa).

Residues 1-21 form a disordered region; that stretch reads MAVQQNKVSKSRRNNRRAHDS.

This sequence belongs to the bacterial ribosomal protein bL32 family.

The chain is Large ribosomal subunit protein bL32 from Roseobacter denitrificans (strain ATCC 33942 / OCh 114) (Erythrobacter sp. (strain OCh 114)).